Consider the following 392-residue polypeptide: 1-deoxy-D-xylulose 5-phosphate reductoisomerase (392 aa).

Residues T10, G11, S12, I13, N38, and N124 each contribute to the NADPH site. K125 contacts 1-deoxy-D-xylulose 5-phosphate. E126 contacts NADPH. Mn(2+) is bound at residue D150. Residues S151, E152, S176, and H199 each coordinate 1-deoxy-D-xylulose 5-phosphate. E152 is a Mn(2+) binding site. G205 contributes to the NADPH binding site. 4 residues coordinate 1-deoxy-D-xylulose 5-phosphate: S212, N217, K218, and E221. E221 is a Mn(2+) binding site.

The protein belongs to the DXR family. It depends on Mg(2+) as a cofactor. Mn(2+) serves as cofactor.

It carries out the reaction 2-C-methyl-D-erythritol 4-phosphate + NADP(+) = 1-deoxy-D-xylulose 5-phosphate + NADPH + H(+). It functions in the pathway isoprenoid biosynthesis; isopentenyl diphosphate biosynthesis via DXP pathway; isopentenyl diphosphate from 1-deoxy-D-xylulose 5-phosphate: step 1/6. Functionally, catalyzes the NADPH-dependent rearrangement and reduction of 1-deoxy-D-xylulose-5-phosphate (DXP) to 2-C-methyl-D-erythritol 4-phosphate (MEP). This is 1-deoxy-D-xylulose 5-phosphate reductoisomerase from Synechococcus sp. (strain JA-2-3B'a(2-13)) (Cyanobacteria bacterium Yellowstone B-Prime).